Consider the following 302-residue polypeptide: Large ribosomal subunit protein bL28m (302 aa).

This sequence belongs to the bacterial ribosomal protein bL28 family. In terms of assembly, component of the mitochondrial ribosome large subunit (39S) which comprises a 16S rRNA and about 50 distinct proteins.

It is found in the mitochondrion. This Drosophila melanogaster (Fruit fly) protein is Large ribosomal subunit protein bL28m (mRpL28).